The sequence spans 397 residues: Probable peptidoglycan glycosyltransferase FtsW (397 aa).

Over 1–18 the chain is Cytoplasmic; it reads MSALTLTASKNTQTMTLD. Residues 19–39 form a helical membrane-spanning segment; the sequence is LPLLGSALALAAIGLIMVTSA. At 40-58 the chain is on the periplasmic side; that stretch reads SVDFADDANGQALYYMWRH. A helical transmembrane segment spans residues 59–79; that stretch reads LTYLLAGVAVGFVILRLPLEW. The Cytoplasmic segment spans residues 80 to 83; sequence WHKQ. The chain crosses the membrane as a helical span at residues 84–104; that stretch reads SWLLLVVALGFLVAVLIPGIG. The Periplasmic portion of the chain corresponds to 105-112; the sequence is RTVNGSTR. The chain crosses the membrane as a helical span at residues 113-133; that stretch reads WISLGVINIQASEIAKVCLAI. Topologically, residues 134–148 are cytoplasmic; the sequence is YTASYLVRRLDEVRG. The helical transmembrane segment at 149-169 threads the bilayer; sequence SWWGFAKPLLVLMLVALLLLM. The Periplasmic segment spans residues 170–172; sequence EPD. Residues 173-193 traverse the membrane as a helical segment; that stretch reads FGALVVTMCAVVGMIFLSGVA. Topologically, residues 194-196 are cytoplasmic; the sequence is LSR. A helical membrane pass occupies residues 197–217; sequence FAALLMFCVGSVALLAVSQPY. Residues 218–272 lie on the Periplasmic side of the membrane; sequence RLKRLTAYTDPWADQFDSGYQLTQALIAFGRGEWSGVGLGNSVQKLFYLPEAHTD. A helical membrane pass occupies residues 273-293; the sequence is FVFAIIAEELGLLGSLLIIVL. Residues 294–316 lie on the Cytoplasmic side of the membrane; that stretch reads FGVLLWRGMYVSRVAERAGQLFN. A helical transmembrane segment spans residues 317-337; that stretch reads AYAGYGVTLLLGGQALINLGV. At 338–348 the chain is on the periplasmic side; it reads NTGLLPTKGLT. A helical transmembrane segment spans residues 349–369; the sequence is LPLISYGGSSLIISCLCVAIL. The Cytoplasmic segment spans residues 370-397; it reads LRIGSEAVSGEQTEDESPKVKNRGGAQR.

This sequence belongs to the SEDS family. FtsW subfamily.

The protein localises to the cell inner membrane. The catalysed reaction is [GlcNAc-(1-&gt;4)-Mur2Ac(oyl-L-Ala-gamma-D-Glu-L-Lys-D-Ala-D-Ala)](n)-di-trans,octa-cis-undecaprenyl diphosphate + beta-D-GlcNAc-(1-&gt;4)-Mur2Ac(oyl-L-Ala-gamma-D-Glu-L-Lys-D-Ala-D-Ala)-di-trans,octa-cis-undecaprenyl diphosphate = [GlcNAc-(1-&gt;4)-Mur2Ac(oyl-L-Ala-gamma-D-Glu-L-Lys-D-Ala-D-Ala)](n+1)-di-trans,octa-cis-undecaprenyl diphosphate + di-trans,octa-cis-undecaprenyl diphosphate + H(+). The protein operates within cell wall biogenesis; peptidoglycan biosynthesis. Its function is as follows. Peptidoglycan polymerase that is essential for cell division. The chain is Probable peptidoglycan glycosyltransferase FtsW from Hahella chejuensis (strain KCTC 2396).